The following is a 93-amino-acid chain: Small ribosomal subunit protein uS19 (93 aa).

Residues 72 to 93 (GEFSPTRTYRGHNKKDKKMQKK) form a disordered region. A compositionally biased stretch (basic residues) spans 80 to 93 (YRGHNKKDKKMQKK).

This sequence belongs to the universal ribosomal protein uS19 family.

Functionally, protein S19 forms a complex with S13 that binds strongly to the 16S ribosomal RNA. This Aster yellows witches'-broom phytoplasma (strain AYWB) protein is Small ribosomal subunit protein uS19.